Consider the following 88-residue polypeptide: UPF0335 protein M446_5200 (88 aa).

It belongs to the UPF0335 family.

In Methylobacterium sp. (strain 4-46), this protein is UPF0335 protein M446_5200.